The chain runs to 441 residues: MQQATAPKISFVSLGCPKALVDSERIITRLRAEGYELARKHDGADLVIVNTCGFLDSAKQESLAAIGEAMATNGKVIVTGCMGAEPEQIEAAYPGVLSITGPQQYESVLEAVHRARPALHNPHLDLVPPQGVRLTPRHYAYLKISEGCNNRCSFCIIPKLRGDLVSRPAGDVLREAEKLVAAGVKELLVISQDTSAYGVDVKYAESPWKDRAVRAKFLDLASELGELGAWVRLHYVYPYPHVDEVIGLMADGKVLPYLDIPFQHASPDVLKLMKRPAAQDKTLDRIKRWREQCPDLALRSTFIVGFPGETERDFEFLLEWLDEAEIDRLGAFKYEPVAGAPSNALPDQIADEVKQERWNRLMARQQAISARRLKRKVGTRQQVIIDEIGPTVAKGRSKADAPDIDGAVYLSSRRPLRVGEIVTAKIDRADAYDLHGTVAGF.

The MTTase N-terminal domain maps to 7–117; the sequence is PKISFVSLGC…VLEAVHRARP (111 aa). Residues Cys-16, Cys-52, Cys-81, Cys-148, Cys-152, and Cys-155 each contribute to the [4Fe-4S] cluster site. The 238-residue stretch at 134–371 folds into the Radical SAM core domain; it reads LTPRHYAYLK…MARQQAISAR (238 aa). A TRAM domain is found at 374–440; sequence KRKVGTRQQV…AYDLHGTVAG (67 aa).

It belongs to the methylthiotransferase family. RimO subfamily. It depends on [4Fe-4S] cluster as a cofactor.

It localises to the cytoplasm. The enzyme catalyses L-aspartate(89)-[ribosomal protein uS12]-hydrogen + (sulfur carrier)-SH + AH2 + 2 S-adenosyl-L-methionine = 3-methylsulfanyl-L-aspartate(89)-[ribosomal protein uS12]-hydrogen + (sulfur carrier)-H + 5'-deoxyadenosine + L-methionine + A + S-adenosyl-L-homocysteine + 2 H(+). Catalyzes the methylthiolation of an aspartic acid residue of ribosomal protein uS12. This is Ribosomal protein uS12 methylthiotransferase RimO from Rhodopseudomonas palustris (strain ATCC BAA-98 / CGA009).